Here is a 457-residue protein sequence, read N- to C-terminus: tRNA modification GTPase MnmE (457 aa).

(6S)-5-formyl-5,6,7,8-tetrahydrofolate-binding residues include Arg-25, Glu-87, and Arg-126. Residues 223–377 form the TrmE-type G domain; sequence GISTAIIGRP…IEERINQLFF (155 aa). Position 233 (Asn-233) interacts with K(+). Residues 233–238, 252–258, and 277–280 each bind GTP; these read NVGKSS, TDIEGTT, and DTAG. Ser-237 lines the Mg(2+) pocket. Thr-252, Ile-254, and Thr-257 together coordinate K(+). Thr-258 is a Mg(2+) binding site. Lys-457 serves as a coordination point for (6S)-5-formyl-5,6,7,8-tetrahydrofolate.

The protein belongs to the TRAFAC class TrmE-Era-EngA-EngB-Septin-like GTPase superfamily. TrmE GTPase family. As to quaternary structure, homodimer. Heterotetramer of two MnmE and two MnmG subunits. K(+) serves as cofactor.

The protein localises to the cytoplasm. Its function is as follows. Exhibits a very high intrinsic GTPase hydrolysis rate. Involved in the addition of a carboxymethylaminomethyl (cmnm) group at the wobble position (U34) of certain tRNAs, forming tRNA-cmnm(5)s(2)U34. The protein is tRNA modification GTPase MnmE of Streptococcus sanguinis (strain SK36).